Consider the following 469-residue polypeptide: Argininosuccinate lyase (469 aa).

Belongs to the lyase 1 family. Argininosuccinate lyase subfamily.

It localises to the cytoplasm. It carries out the reaction 2-(N(omega)-L-arginino)succinate = fumarate + L-arginine. The protein operates within amino-acid biosynthesis; L-arginine biosynthesis; L-arginine from L-ornithine and carbamoyl phosphate: step 3/3. The polypeptide is Argininosuccinate lyase (Burkholderia vietnamiensis (strain G4 / LMG 22486) (Burkholderia cepacia (strain R1808))).